Reading from the N-terminus, the 412-residue chain is Aspartate kinase Ask_LysC (412 aa).

The ACT domain maps to 265-332; sequence LTIRGVPDTP…QGIAAEMGAR (68 aa).

This sequence belongs to the aspartokinase family.

The protein localises to the cytoplasm. It catalyses the reaction L-aspartate + ATP = 4-phospho-L-aspartate + ADP. It functions in the pathway amino-acid biosynthesis; L-lysine biosynthesis via DAP pathway; (S)-tetrahydrodipicolinate from L-aspartate: step 1/4. Its pathway is amino-acid biosynthesis; L-methionine biosynthesis via de novo pathway; L-homoserine from L-aspartate: step 1/3. The protein operates within amino-acid biosynthesis; L-threonine biosynthesis; L-threonine from L-aspartate: step 1/5. With respect to regulation, allosterically and strongly feedback inhibited by tryptophan. Addition of lysine alone slightly enhances activity. The simultaneous addition of lysine and tryptophan leads to very strong feedback inhibition of the enzyme. The feedback control by tryptophan is reduced in the presence of the compatible solutes hydroxyectoine or ectoine. In terms of biological role, involved in the biosynthesis of L-aspartate-beta-semialdehyde which is a central intermediate in the biosynthesis of different amino acids (L-lysine, L-methionine, L-threonine). Catalyzes the phosphorylation of the beta-carboxyl group of L-aspartate to yield 4-phospho-L-aspartate. The chain is Aspartate kinase Ask_LysC (lysC) from Stutzerimonas stutzeri (strain A1501) (Pseudomonas stutzeri).